A 623-amino-acid polypeptide reads, in one-letter code: Chaperone protein DnaK (623 aa).

Position 175 is a phosphothreonine; by autocatalysis (T175). A disordered region spans residues 580-623 (PEGAQGAGFDPNNMGGANAGNASAENDKKDDNVVDADYKVEDDK). Residues 591–603 (NNMGGANAGNASA) are compositionally biased toward low complexity. Residues 604 to 623 (ENDKKDDNVVDADYKVEDDK) are compositionally biased toward basic and acidic residues.

The protein belongs to the heat shock protein 70 family.

Functionally, acts as a chaperone. This chain is Chaperone protein DnaK, found in Clostridium botulinum (strain Okra / Type B1).